The following is a 371-amino-acid chain: tRNA-specific 2-thiouridylase MnmA (371 aa).

ATP is bound by residues 22 to 29 (GLSGGVDS) and methionine 48. Residues 108–110 (NPD) are interaction with target base in tRNA. Residue cysteine 113 is the Nucleophile of the active site. The cysteines at positions 113 and 209 are disulfide-linked. Glycine 137 is a binding site for ATP. The interaction with tRNA stretch occupies residues 159-161 (KDQ). Cysteine 209 serves as the catalytic Cysteine persulfide intermediate.

The protein belongs to the MnmA/TRMU family.

The protein localises to the cytoplasm. The enzyme catalyses S-sulfanyl-L-cysteinyl-[protein] + uridine(34) in tRNA + AH2 + ATP = 2-thiouridine(34) in tRNA + L-cysteinyl-[protein] + A + AMP + diphosphate + H(+). Functionally, catalyzes the 2-thiolation of uridine at the wobble position (U34) of tRNA, leading to the formation of s(2)U34. This Coxiella burnetii (strain CbuG_Q212) (Coxiella burnetii (strain Q212)) protein is tRNA-specific 2-thiouridylase MnmA.